Reading from the N-terminus, the 192-residue chain is UPF0301 protein Bamb_0737 (192 aa).

It belongs to the UPF0301 (AlgH) family.

The polypeptide is UPF0301 protein Bamb_0737 (Burkholderia ambifaria (strain ATCC BAA-244 / DSM 16087 / CCUG 44356 / LMG 19182 / AMMD) (Burkholderia cepacia (strain AMMD))).